We begin with the raw amino-acid sequence, 201 residues long: Recombination protein RecR (201 aa).

Residues 57–72 (CQVCYSLSDNDICDIC) form a C4-type zinc finger. The region spanning 80 to 177 (NKICIVESYP…RITRITYGIS (98 aa)) is the Toprim domain.

This sequence belongs to the RecR family.

Its function is as follows. May play a role in DNA repair. It seems to be involved in an RecBC-independent recombinational process of DNA repair. It may act with RecF and RecO. This Brachyspira hyodysenteriae (strain ATCC 49526 / WA1) protein is Recombination protein RecR.